The following is a 158-amino-acid chain: Protein Smg homolog (158 aa).

The protein belongs to the Smg family.

This is Protein Smg homolog from Shewanella sp. (strain MR-4).